The primary structure comprises 497 residues: MTSKKFSDKKNNYDAILVGAGIMSGTLALLLTEILPELKILIIEKLKIPGSESSGAFNNAGTGHAANCELNYTPLDDYGHLKIEKALSINRSFEKSMSLWASLYSSQKIDIKKFLKFIPHISFVTGSENVSFLKKRFKKMTEYKEFEDMEFSSSFNQISSWAPLITKSRNPLDEVAATRVKRGTDINFEVLTREYLKYISKNKNVEISYETELNDLKKTSNKEWELNISMEGRKVNLKTSYVFLGAGGKTINYLQKSNIPEAKVYGGFPVSGKWLICEENSLTEKHNAKVYGRADIGSPPMSVPHLDTRWIEGKKFLLYGPFAGFTTKFLKQGSYLDLFNSLKKNNLLSMLDVGIKNNDLINYLFSQSIKSHKSRVENLRNMMPSADPSNWYLENAGQRVQIIKKTKKGGSLKFGTEIVNAADGSLSALLGASPGASTAVSIMIEVLKKSCLFTLDKSILEQKISHLLYESELKNQNENDFLENLKKRNNSILGFHP.

This sequence belongs to the MQO family. The cofactor is FAD.

The enzyme catalyses (S)-malate + a quinone = a quinol + oxaloacetate. The protein operates within carbohydrate metabolism; tricarboxylic acid cycle; oxaloacetate from (S)-malate (quinone route): step 1/1. The protein is Probable malate:quinone oxidoreductase of Prochlorococcus marinus (strain MIT 9515).